Reading from the N-terminus, the 236-residue chain is MKYKLLPCLLAILLTGCDRTEVTLSFTPEMASFSNEFDFDPLRGPVKDFTQTLMDEQGEVTKRVSGTLSEEGCFDSLELLDLENNTLVALVLDANYYRDAETLEKRVRLQGKCQLAELPSAGVSWETDDNGFVIKASSKQMQMEYRYDDQGYPLGKTTKSNDKTLSVSATPSTDPIKKLDYTAVTLLNNQRVGNVKQSCEYDNHANPVDCQLIIVDEGVKPAVERVYTIKNTIDYY.

The signal sequence occupies residues 1 to 16 (MKYKLLPCLLAILLTG). Cys17 carries N-palmitoyl cysteine lipidation. Cys17 carries S-diacylglycerol cysteine lipidation.

Belongs to the UPF0257 family.

Its subcellular location is the cell membrane. The sequence is that of UPF0257 lipoprotein YnfC from Escherichia coli O45:K1 (strain S88 / ExPEC).